A 344-amino-acid polypeptide reads, in one-letter code: DNA-directed RNA polymerase subunit alpha (344 aa).

The alpha N-terminal domain (alpha-NTD) stretch occupies residues 1-246 (MLVEKFLKDF…EFLFPLVDFE (246 aa)). The tract at residues 259 to 344 (ESSNLLDMSI…VLSKNVKISE (86 aa)) is alpha C-terminal domain (alpha-CTD).

This sequence belongs to the RNA polymerase alpha chain family. In terms of assembly, homodimer. The RNAP catalytic core consists of 2 alpha, 1 beta, 1 beta' and 1 omega subunit. When a sigma factor is associated with the core the holoenzyme is formed, which can initiate transcription.

The enzyme catalyses RNA(n) + a ribonucleoside 5'-triphosphate = RNA(n+1) + diphosphate. Its function is as follows. DNA-dependent RNA polymerase catalyzes the transcription of DNA into RNA using the four ribonucleoside triphosphates as substrates. The protein is DNA-directed RNA polymerase subunit alpha of Borreliella burgdorferi (strain ATCC 35210 / DSM 4680 / CIP 102532 / B31) (Borrelia burgdorferi).